A 138-amino-acid chain; its full sequence is Small ribosomal subunit protein uS11c (138 aa).

Residues 1-21 (MAKSIPKIGSRKTGRIGSRKH) are disordered. The span at 9-21 (GSRKTGRIGSRKH) shows a compositional bias: basic residues.

The protein belongs to the universal ribosomal protein uS11 family. As to quaternary structure, part of the 30S ribosomal subunit.

It localises to the plastid. The protein localises to the chloroplast. The polypeptide is Small ribosomal subunit protein uS11c (Pisum sativum (Garden pea)).